Consider the following 422-residue polypeptide: CRISPR-associated endodeoxyribonuclease Cas12f1 (422 aa).

Residues 1 to 126 (MIKVYRYEIV…PSYKRDIPLD (126 aa)) form a recognition domain (REC) region. The tract at residues 127–211 (LIKENISVNR…YLNISYDFEP (85 aa)) is wedge domain (WED). The interval 212-220 (QTRVLDLNK) is linker. The tract at residues 221 to 370 (IMGIDLGVAV…IKIDPQYTSQ (150 aa)) is ruvC-I. Catalysis depends on residues Asp225 and Glu324. The target nucleic acid-binding (TNB) stretch occupies residues 371-399 (RCSECGNIDSGNRIGQAIFKCRACGYEAN). Zn(2+) is bound by residues Cys372, Cys375, Cys391, and Cys394. The ruvC-II stretch occupies residues 400–420 (ADYNAARNIAIPNIDKIIAES). The active site involves Asp401.

Belongs to the CRISPR-associated endonuclease Cas12f family. In terms of assembly, an asymmetric homodimer. Guide RNA is probably required for dimerization. Mg(2+) serves as cofactor. Requires Zn(2+) as cofactor.

Functionally, CRISPR (clustered regularly interspaced short palindromic repeat), is an adaptive immune system that provides protection against mobile genetic elements (viruses, transposable elements and conjugative plasmids). CRISPR clusters contain sequences complementary to antecedent mobile elements and target invading nucleic acids. CRISPR clusters are transcribed and processed into CRISPR RNA (crRNA), which requires a trans-encoded small RNA (tracrRNA), but not this protein. Recognizes a short motif in the CRISPR repeat sequences (the 5' PAM or protospacer adjacent motif, YTT in this organism) to help distinguish self versus nonself, as targets within the CRISPR locus do not have PAMs. Has dsDNA endonuclease activity upon expression in E.coli of this protein, a mini CRISPR array and the probable tracrRNA. Plasmid cleavage is centered around positions 19-24 base pairs 3' of PAM. The mini system protects E.coli against transformation by foreign plasmids. The polypeptide is CRISPR-associated endodeoxyribonuclease Cas12f1 (Sulfoacidibacillus thermotolerans (Acidibacillus sulfuroxidans)).